Reading from the N-terminus, the 155-residue chain is uncharacterized protein (155 aa).

Residues M1–P14 are compositionally biased toward polar residues. The disordered stretch occupies residues M1–D44. Residues R17 to A30 show a composition bias toward low complexity.

This is an uncharacterized protein from Pseudomonas aeruginosa (strain ATCC 15692 / DSM 22644 / CIP 104116 / JCM 14847 / LMG 12228 / 1C / PRS 101 / PAO1).